The sequence spans 749 residues: Formate acetyltransferase (749 aa).

Residues 3–619 (ETNKNHATAW…KTGNTPDGRK (617 aa)) enclose the PFL domain. Cys-413 (S-acetylcysteine intermediate) is an active-site residue. Residue Cys-414 is the Cysteine radical intermediate of the active site. The region spanning 626–749 (PGANPMHGRD…VISRTFHESM (124 aa)) is the Glycine radical domain. Residue Gly-724 is modified to Glycine radical.

The protein belongs to the glycyl radical enzyme (GRE) family. PFL subfamily. Homodimer.

The protein resides in the cytoplasm. The catalysed reaction is formate + acetyl-CoA = pyruvate + CoA. It participates in fermentation; pyruvate fermentation; formate from pyruvate: step 1/1. Functionally, catalyzes the conversion of pyruvate to formate and acetyl-CoA. The protein is Formate acetyltransferase (pflB) of Staphylococcus aureus (strain USA300).